A 1140-amino-acid chain; its full sequence is Condensin-2 complex subunit G2 (1140 aa).

An HEAT repeat occupies 460–493 (LLPALKSSLHDSSEKVRVAFVGMLLKIKAARAAK).

As to quaternary structure, component of the condensin-2 complex, which contains the smc2 and smc4 heterodimer, and three non SMC subunits that probably regulate the complex: ncaph2, ncapd3 and ncapg2.

The protein resides in the nucleus. Its function is as follows. Regulatory subunit of the condensin-2 complex, a complex which establishes mitotic chromosome architecture and is involved in physical rigidity of the chromatid axis. Plays a role in the embryonic development of the head and kidney structures. The sequence is that of Condensin-2 complex subunit G2 from Danio rerio (Zebrafish).